Reading from the N-terminus, the 106-residue chain is Small ribosomal subunit protein uS10 (106 aa).

It belongs to the universal ribosomal protein uS10 family. As to quaternary structure, part of the 30S ribosomal subunit.

In terms of biological role, involved in the binding of tRNA to the ribosomes. In Synechococcus sp. (strain RCC307), this protein is Small ribosomal subunit protein uS10.